The primary structure comprises 432 residues: Anaerobic glycerol-3-phosphate dehydrogenase subunit B (432 aa).

It belongs to the anaerobic G-3-P dehydrogenase subunit B family. As to quaternary structure, composed of a catalytic GlpA/B dimer and of membrane bound GlpC. The cofactor is FMN.

It carries out the reaction a quinone + sn-glycerol 3-phosphate = dihydroxyacetone phosphate + a quinol. It functions in the pathway polyol metabolism; glycerol degradation via glycerol kinase pathway; glycerone phosphate from sn-glycerol 3-phosphate (anaerobic route): step 1/1. In terms of biological role, conversion of glycerol 3-phosphate to dihydroxyacetone. Uses fumarate or nitrate as electron acceptor. In Haemophilus influenzae (strain 86-028NP), this protein is Anaerobic glycerol-3-phosphate dehydrogenase subunit B.